The following is a 248-amino-acid chain: MKSYIEPFIASKALSQNSQKAYRYDLQQFCQLVGERVNQDKLLLYQNSIANLSLSAKKRKLSTANQFLYYLYQIKYLNSYFRLTDTMKVMRTEKQQAAIINTDIFYQKTPFVWGQLISLLILELGLTPSEVAGIEVANLDLSFQMLTLKTKKGVRVLPLSQILIPFLEQQLVGKEVYLFEHRGIPFSRQWFFNHLKTFVRSIGYEGLTAQKLREQFILKEKLAGKSIIELSDILGLKSPVTLEKYYKS.

In terms of domain architecture, Core-binding (CB) spans 1–72 (MKSYIEPFIA…TANQFLYYLY (72 aa)). The region spanning 85 to 248 (DTMKVMRTEK…PVTLEKYYKS (164 aa)) is the Tyr recombinase domain. Active-site residues include lysine 149 and arginine 213. Tyrosine 245 serves as the catalytic O-(3'-phospho-DNA)-tyrosine intermediate.

This sequence belongs to the 'phage' integrase family. XerD-like subfamily.

The protein localises to the cytoplasm. Putative tyrosine recombinase. Not involved in the cutting and rejoining of the recombining DNA molecules on dif(SL) site. This chain is Tyrosine recombinase XerD-like, found in Streptococcus pyogenes serotype M6 (strain ATCC BAA-946 / MGAS10394).